We begin with the raw amino-acid sequence, 81 residues long: Putative defensin-like protein 26 (81 aa).

Positions Met-1 to Gly-21 are cleaved as a signal peptide. Disulfide bonds link Cys-33–Cys-81 and Cys-52–Cys-77.

This sequence belongs to the DEFL family.

It is found in the secreted. The protein is Putative defensin-like protein 26 of Arabidopsis thaliana (Mouse-ear cress).